Consider the following 847-residue polypeptide: Putative disease resistance RPP13-like protein 3 (847 aa).

Residues 24–41 (LMGVKDDLEELKTELTCI) are a coiled coil. Positions 143 to 453 (TNVRVRQLRR…AEGFIQEDEE (311 aa)) constitute an NB-ARC domain. 192–199 (GMGGLGKT) is an ATP binding site.

It belongs to the disease resistance NB-LRR family. RPP13 subfamily.

In terms of biological role, potential disease resistance protein. This chain is Putative disease resistance RPP13-like protein 3 (RPP13L3), found in Arabidopsis thaliana (Mouse-ear cress).